A 739-amino-acid chain; its full sequence is Catalase-peroxidase 1 (739 aa).

The tract at residues 1 to 33 (MPEDRPIEDSPPIGEAQTDAPAGGCPAGFGRIK) is disordered. The segment at residues 113–236 (WHAAGTYRVS…LAAVQMGLIY (124 aa)) is a cross-link (tryptophyl-tyrosyl-methioninium (Trp-Tyr) (with M-262)). H114 serves as the catalytic Proton acceptor. Positions 236–262 (YVNPEGPNGNPDPQASAIDIRETFGRM) form a cross-link, tryptophyl-tyrosyl-methioninium (Tyr-Met) (with W-113). H277 is a heme b binding site.

Belongs to the peroxidase family. Peroxidase/catalase subfamily. As to quaternary structure, homodimer or homotetramer. It depends on heme b as a cofactor. In terms of processing, formation of the three residue Trp-Tyr-Met cross-link is important for the catalase, but not the peroxidase activity of the enzyme.

The catalysed reaction is H2O2 + AH2 = A + 2 H2O. It catalyses the reaction 2 H2O2 = O2 + 2 H2O. Functionally, bifunctional enzyme with both catalase and broad-spectrum peroxidase activity. May play a role in the intracellular survival of mycobacteria. The chain is Catalase-peroxidase 1 from Mycolicibacterium smegmatis (strain ATCC 700084 / mc(2)155) (Mycobacterium smegmatis).